Here is an 814-residue protein sequence, read N- to C-terminus: Outer membrane usher protein SefC (814 aa).

Residues 1–30 (MKKTTITLFVLTSVFHSGNVFSRQYNFDYG) form the signal peptide. Cys792 and Cys813 are joined by a disulfide.

The protein belongs to the fimbrial export usher family.

It localises to the cell outer membrane. Its function is as follows. Involved in the export and assembly of the SefA fimbrial subunit. The chain is Outer membrane usher protein SefC (sefC) from Salmonella enteritidis.